Here is a 131-residue protein sequence, read N- to C-terminus: D-ribose pyranase (131 aa).

His-20 (proton donor) is an active-site residue. Residues Asp-28, His-98, and 120 to 122 each bind substrate; that span reads FSN.

It belongs to the RbsD / FucU family. RbsD subfamily. As to quaternary structure, homodecamer.

Its subcellular location is the cytoplasm. It carries out the reaction beta-D-ribopyranose = beta-D-ribofuranose. The protein operates within carbohydrate metabolism; D-ribose degradation; D-ribose 5-phosphate from beta-D-ribopyranose: step 1/2. Its function is as follows. Catalyzes the interconversion of beta-pyran and beta-furan forms of D-ribose. The chain is D-ribose pyranase from Lactobacillus acidophilus (strain ATCC 700396 / NCK56 / N2 / NCFM).